Here is a 381-residue protein sequence, read N- to C-terminus: Succinyl-diaminopimelate desuccinylase (381 aa).

Histidine 69 serves as a coordination point for Zn(2+). Aspartate 71 is a catalytic residue. Aspartate 103 lines the Zn(2+) pocket. Glutamate 137 (proton acceptor) is an active-site residue. Zn(2+) contacts are provided by glutamate 138, glutamate 166, and histidine 355.

This sequence belongs to the peptidase M20A family. DapE subfamily. Homodimer. Zn(2+) serves as cofactor. Requires Co(2+) as cofactor.

It carries out the reaction N-succinyl-(2S,6S)-2,6-diaminopimelate + H2O = (2S,6S)-2,6-diaminopimelate + succinate. Its pathway is amino-acid biosynthesis; L-lysine biosynthesis via DAP pathway; LL-2,6-diaminopimelate from (S)-tetrahydrodipicolinate (succinylase route): step 3/3. Catalyzes the hydrolysis of N-succinyl-L,L-diaminopimelic acid (SDAP), forming succinate and LL-2,6-diaminopimelate (DAP), an intermediate involved in the bacterial biosynthesis of lysine and meso-diaminopimelic acid, an essential component of bacterial cell walls. The sequence is that of Succinyl-diaminopimelate desuccinylase from Rickettsia massiliae (strain Mtu5).